Consider the following 237-residue polypeptide: Uracil-DNA glycosylase (237 aa).

The active-site Proton acceptor is the D77.

This sequence belongs to the uracil-DNA glycosylase (UDG) superfamily. UNG family.

The protein resides in the cytoplasm. It catalyses the reaction Hydrolyzes single-stranded DNA or mismatched double-stranded DNA and polynucleotides, releasing free uracil.. Its function is as follows. Excises uracil residues from the DNA which can arise as a result of misincorporation of dUMP residues by DNA polymerase or due to deamination of cytosine. This chain is Uracil-DNA glycosylase, found in Acinetobacter baumannii (strain ACICU).